The following is a 207-amino-acid chain: Small ribosomal subunit protein uS4 (207 aa).

Residues 33–54 (KLDSKPGQHGRTSGARTSDYGN) form a disordered region. The segment covering 42–53 (GRTSGARTSDYG) has biased composition (polar residues). The region spanning 97-160 (SRLDNVVYRM…KKQVRIAEAL (64 aa)) is the S4 RNA-binding domain.

This sequence belongs to the universal ribosomal protein uS4 family. In terms of assembly, part of the 30S ribosomal subunit. Contacts protein S5. The interaction surface between S4 and S5 is involved in control of translational fidelity.

Its function is as follows. One of the primary rRNA binding proteins, it binds directly to 16S rRNA where it nucleates assembly of the body of the 30S subunit. In terms of biological role, with S5 and S12 plays an important role in translational accuracy. The sequence is that of Small ribosomal subunit protein uS4 from Cupriavidus pinatubonensis (strain JMP 134 / LMG 1197) (Cupriavidus necator (strain JMP 134)).